The chain runs to 187 residues: Cytokinin riboside 5'-monophosphate phosphoribohydrolase (187 aa).

Residues Glu-80, 98 to 99, 115 to 121, and Thr-127 each bind substrate; these read RK and GVGTLDE.

This sequence belongs to the LOG family.

It carries out the reaction N(6)-(dimethylallyl)adenosine 5'-phosphate + H2O = N(6)-dimethylallyladenine + D-ribose 5-phosphate. The enzyme catalyses 9-ribosyl-trans-zeatin 5'-phosphate + H2O = trans-zeatin + D-ribose 5-phosphate. Functionally, catalyzes the hydrolytic removal of ribose 5'-monophosphate from nitrogen N6-modified adenosines, the final step of bioactive cytokinin synthesis. This Mycobacterium marinum (strain ATCC BAA-535 / M) protein is Cytokinin riboside 5'-monophosphate phosphoribohydrolase.